The chain runs to 44 residues: Antibacterial protein 3 homolog (44 aa).

The protein belongs to the staphylococcal hemolytic protein family.

Its subcellular location is the secreted. In terms of biological role, has hemolytic activity and also inhibits the growth of gonococci. This Staphylococcus haemolyticus (strain JCSC1435) protein is Antibacterial protein 3 homolog.